The primary structure comprises 272 residues: NADPH-dependent 7-cyano-7-deazaguanine reductase (272 aa).

Position 82 to 84 (82 to 84) interacts with substrate; that stretch reads IES. NADPH is bound at residue 84-85; sequence SK. Catalysis depends on C178, which acts as the Thioimide intermediate. The Proton donor role is filled by D185. Residue 217-218 participates in substrate binding; it reads HE. 246 to 247 is a binding site for NADPH; sequence RG.

This sequence belongs to the GTP cyclohydrolase I family. QueF type 2 subfamily. Homodimer.

It localises to the cytoplasm. It carries out the reaction 7-aminomethyl-7-carbaguanine + 2 NADP(+) = 7-cyano-7-deazaguanine + 2 NADPH + 3 H(+). Its pathway is tRNA modification; tRNA-queuosine biosynthesis. Its function is as follows. Catalyzes the NADPH-dependent reduction of 7-cyano-7-deazaguanine (preQ0) to 7-aminomethyl-7-deazaguanine (preQ1). The sequence is that of NADPH-dependent 7-cyano-7-deazaguanine reductase from Stenotrophomonas maltophilia (strain K279a).